Reading from the N-terminus, the 142-residue chain is Lysosomal enzyme trafficking factor (142 aa).

Transmembrane regions (helical) follow at residues 8 to 28 (MGWI…YYIF) and 76 to 96 (LLPF…VFLF).

This sequence belongs to the LYSET family.

The protein localises to the golgi apparatus membrane. Required for mannose-6-phosphate-dependent trafficking of lysosomal enzymes. LYSET bridges GlcNAc-1-phosphate transferase (GNPTAB), to the membrane-bound transcription factor site-1 protease (MBTPS1), thus allowing proteolytic activation of the GNPTAB. GNPTAB is involved in the regulation of M6P-dependent Golgi-to-lysosome trafficking of lysosomal enzymes. LYSET is thus an essential factor for maturation and delivery of lysosomal hydrolases. The sequence is that of Lysosomal enzyme trafficking factor (tmem251) from Danio rerio (Zebrafish).